An 81-amino-acid polypeptide reads, in one-letter code: Small ribosomal subunit protein bS16 (81 aa).

This sequence belongs to the bacterial ribosomal protein bS16 family.

This Coprothermobacter proteolyticus (strain ATCC 35245 / DSM 5265 / OCM 4 / BT) protein is Small ribosomal subunit protein bS16.